The following is a 151-amino-acid chain: Large ribosomal subunit protein uL13 (151 aa).

This sequence belongs to the universal ribosomal protein uL13 family. As to quaternary structure, part of the 50S ribosomal subunit.

This protein is one of the early assembly proteins of the 50S ribosomal subunit, although it is not seen to bind rRNA by itself. It is important during the early stages of 50S assembly. In Acaryochloris marina (strain MBIC 11017), this protein is Large ribosomal subunit protein uL13.